Here is a 300-residue protein sequence, read N- to C-terminus: Alpha-ketoglutarate-dependent dioxygenase alkB homolog 4 (300 aa).

Ala-2 carries the post-translational modification N-acetylalanine. The 125-residue stretch at 148 to 272 (PVEQCNLDYS…RVCATFRELS (125 aa)) folds into the Fe2OG dioxygenase domain. Residues His-167, Asp-169, and His-252 each coordinate Fe cation. Residue Arg-263 participates in 2-oxoglutarate binding.

Belongs to the alkB family. Interacts with ZFHX3, MLLT3, MLLT1, HSF4, EP300, TES, EIF3C, MTMR6 and PSMA6. Requires Fe(2+) as cofactor.

It localises to the cytoplasm. It is found in the nucleus. The protein resides in the nucleolus. The protein localises to the midbody. The enzyme catalyses an N(6)-methyl-2'-deoxyadenosine in DNA + 2-oxoglutarate + O2 = a 2'-deoxyadenosine in DNA + formaldehyde + succinate + CO2. It catalyses the reaction N(6)-methyl-L-lysyl-[protein] + 2-oxoglutarate + O2 = L-lysyl-[protein] + formaldehyde + succinate + CO2. Dioxygenase that mediates demethylation of actin monomethylated at 'Lys-84' (K84me1), thereby acting as a regulator of actomyosin-processes. Demethylation of actin K84me1 is required for maintaining actomyosin dynamics supporting normal cleavage furrow ingression during cytokinesis and cell migration. In addition to proteins, also demethylates DNA: specifically demethylates DNA methylated on the 6th position of adenine (N(6)-methyladenosine) DNA, thereby regulating Polycomb silencing. The polypeptide is Alpha-ketoglutarate-dependent dioxygenase alkB homolog 4 (Mus musculus (Mouse)).